The primary structure comprises 121 residues: Small ribosomal subunit protein uS13 (121 aa).

The interval 97–121 (VRGQRTRTNARTRRGARKTVAGRKK) is disordered. A compositionally biased stretch (basic residues) spans 100–121 (QRTRTNARTRRGARKTVAGRKK).

Belongs to the universal ribosomal protein uS13 family. As to quaternary structure, part of the 30S ribosomal subunit. Forms a loose heterodimer with protein S19. Forms two bridges to the 50S subunit in the 70S ribosome.

In terms of biological role, located at the top of the head of the 30S subunit, it contacts several helices of the 16S rRNA. In the 70S ribosome it contacts the 23S rRNA (bridge B1a) and protein L5 of the 50S subunit (bridge B1b), connecting the 2 subunits; these bridges are implicated in subunit movement. Contacts the tRNAs in the A and P-sites. The protein is Small ribosomal subunit protein uS13 of Prochlorococcus marinus (strain NATL2A).